The following is a 542-amino-acid chain: Endonuclease 4 homolog (542 aa).

Disordered stretches follow at residues Asn-89–Ile-123 and Pro-141–Phe-234. Composition is skewed to low complexity over residues Ser-99–Lys-115 and Asn-147–Thr-170. Residues Thr-171–Thr-206 are a coiled coil. A compositionally biased stretch (acidic residues) spans Glu-179–Glu-196. Residues Thr-205–Ala-215 are compositionally biased toward low complexity. The segment covering Tyr-216–Val-227 has biased composition (basic residues). The Nuclear localization signal signature appears at Pro-222 to Val-227. Zn(2+) contacts are provided by His-328, His-368, Glu-404, Asp-438, His-441, His-475, Asp-488, His-490, and Glu-520.

Belongs to the AP endonuclease 2 family. It depends on Zn(2+) as a cofactor.

The protein localises to the nucleus. It carries out the reaction Endonucleolytic cleavage to 5'-phosphooligonucleotide end-products.. Plays a role in DNA repair. It cleaves phosphodiester bonds at apurinic or apyrimidinic sites (AP sites) to produce new 5'-ends that are base-free deoxyribose 5-phosphate residues. The protein is Endonuclease 4 homolog (apnA) of Dictyostelium discoideum (Social amoeba).